We begin with the raw amino-acid sequence, 486 residues long: E3 ubiquitin-protein ligase RNF8 (486 aa).

An FHA domain is found at V38 to L92. Residues Q68–G72 are required for interaction with PIWIL1. S157 is subject to Phosphoserine. Positions S180–E201 are enriched in polar residues. Positions S180 to L207 are disordered. The RING-type zinc-finger motif lies at C404–R442.

Belongs to the RNF8 family. Homodimer. Forms a E2-E3 ubiquitin ligase complex composed of the RNF8 homodimer and a E2 heterodimer of UBE2N and UBE2V2. Interacts with class III E2s, including UBE2E1, UBE2E2, and UBE2E3 and with UBE2N. Interacts with RXRA. Interacts (via FHA domain) with phosphorylated HERC2 (via C-terminus). Interacts with PIWIL1; leading to sequester RNF8 in the cytoplasm. Interacts with WRAP53/TCAB1. Autoubiquitinated through 'Lys-48' and 'Lys-63' of ubiquitin. 'Lys-63' polyubiquitination is mediated by UBE2N. 'Lys-29'-type polyubiquitination is also observed, but it doesn't require its own functional RING-type zinc finger.

It is found in the nucleus. The protein localises to the cytoplasm. Its subcellular location is the midbody. The protein resides in the chromosome. It localises to the telomere. It catalyses the reaction S-ubiquitinyl-[E2 ubiquitin-conjugating enzyme]-L-cysteine + [acceptor protein]-L-lysine = [E2 ubiquitin-conjugating enzyme]-L-cysteine + N(6)-ubiquitinyl-[acceptor protein]-L-lysine.. Its pathway is protein modification; protein ubiquitination. E3 ubiquitin-protein ligase that plays a key role in DNA damage signaling via 2 distinct roles: by mediating the 'Lys-63'-linked ubiquitination of histones H2A and H2AX and promoting the recruitment of DNA repair proteins at double-strand breaks (DSBs) sites, and by catalyzing 'Lys-48'-linked ubiquitination to remove target proteins from DNA damage sites. Following DNA DSBs, it is recruited to the sites of damage by ATM-phosphorylated MDC1 and catalyzes the 'Lys-63'-linked ubiquitination of histones H2A and H2AX, thereby promoting the formation of TP53BP1 and BRCA1 ionizing radiation-induced foci (IRIF). Also controls the recruitment of UIMC1-BRCC3 (RAP80-BRCC36) and PAXIP1/PTIP to DNA damage sites. Promotes the recruitment of NBN to DNA damage sites by catalyzing 'Lys-6'-linked ubiquitination of NBN. Also recruited at DNA interstrand cross-links (ICLs) sites and catalyzes 'Lys-63'-linked ubiquitination of histones H2A and H2AX, leading to recruitment of FAAP20 and Fanconi anemia (FA) complex, followed by interstrand cross-link repair. H2A ubiquitination also mediates the ATM-dependent transcriptional silencing at regions flanking DSBs in cis, a mechanism to avoid collision between transcription and repair intermediates. Promotes the formation of 'Lys-63'-linked polyubiquitin chains via interactions with the specific ubiquitin-conjugating UBE2N/UBC13 and ubiquitinates non-histone substrates such as PCNA. Substrates that are polyubiquitinated at 'Lys-63' are usually not targeted for degradation. Also catalyzes the formation of 'Lys-48'-linked polyubiquitin chains via interaction with the ubiquitin-conjugating UBE2L6/UBCH8, leading to degradation of substrate proteins such as CHEK2, JMJD2A/KDM4A and KU80/XRCC5: it is still unclear how the preference toward 'Lys-48'- versus 'Lys-63'-linked ubiquitination is regulated but it could be due to RNF8 ability to interact with specific E2 specific ligases. For instance, interaction with phosphorylated HERC2 promotes the association between RNF8 and UBE2N/UBC13 and favors the specific formation of 'Lys-63'-linked ubiquitin chains. Promotes non-homologous end joining (NHEJ) by promoting the 'Lys-48'-linked ubiquitination and degradation the of KU80/XRCC5. Following DNA damage, mediates the ubiquitination and degradation of JMJD2A/KDM4A in collaboration with RNF168, leading to unmask H4K20me2 mark and promote the recruitment of TP53BP1 at DNA damage sites. Following DNA damage, mediates the ubiquitination and degradation of POLD4/p12, a subunit of DNA polymerase delta. In the absence of POLD4, DNA polymerase delta complex exhibits higher proofreading activity. In addition to its function in damage signaling, also plays a role in higher-order chromatin structure by mediating extensive chromatin decondensation. Involved in the activation of ATM by promoting histone H2B ubiquitination, which indirectly triggers histone H4 'Lys-16' acetylation (H4K16ac), establishing a chromatin environment that promotes efficient activation of ATM kinase. Required in the testis, where it plays a role in the replacement of histones during spermatogenesis. At uncapped telomeres, promotes the joining of deprotected chromosome ends by inducing H2A ubiquitination and TP53BP1 recruitment, suggesting that it may enhance cancer development by aggravating telomere-induced genome instability in case of telomeric crisis. Promotes the assembly of RAD51 at DNA DSBs in the absence of BRCA1 and TP53BP1 Also involved in class switch recombination in immune system, via its role in regulation of DSBs repair. May be required for proper exit from mitosis after spindle checkpoint activation and may regulate cytokinesis. May play a role in the regulation of RXRA-mediated transcriptional activity. Not involved in RXRA ubiquitination by UBE2E2. The polypeptide is E3 ubiquitin-protein ligase RNF8 (Pongo abelii (Sumatran orangutan)).